The sequence spans 72 residues: Large ribosomal subunit protein bL31 (72 aa).

4 residues coordinate Zn(2+): cysteine 16, cysteine 18, cysteine 37, and cysteine 40.

This sequence belongs to the bacterial ribosomal protein bL31 family. Type A subfamily. Part of the 50S ribosomal subunit. Zn(2+) serves as cofactor.

Its function is as follows. Binds the 23S rRNA. In Buchnera aphidicola subsp. Schizaphis graminum (strain Sg), this protein is Large ribosomal subunit protein bL31.